A 255-amino-acid chain; its full sequence is Proteasome subunit alpha 2 (255 aa).

The tract at residues 229 to 255 is disordered; it reads AGSSLEEMLPTPAATEDAPPANGDAPS. Positions 238-249 are enriched in low complexity; sequence PTPAATEDAPPA.

The protein belongs to the peptidase T1A family. As to quaternary structure, the 20S proteasome core is composed of 14 alpha and 14 beta subunits that assemble into four stacked heptameric rings, resulting in a barrel-shaped structure. The two inner rings, each composed of seven catalytic beta subunits, are sandwiched by two outer rings, each composed of seven alpha subunits. All four combinations of alpha- and beta-subunits (beta2-alpha1, beta2-alpha2, beta1-alpha2 and beta1-alpha1) yield fully assembled and proteolytically active proteasomes. The catalytic chamber with the active sites is on the inside of the barrel. Has probably a gated structure, the ends of the cylinder being occluded by the N-termini of the alpha-subunits. Is likely capped by the proteasome-associated ATPase, ARC. Post-translationally, the N-terminus is blocked.

It localises to the cytoplasm. Its pathway is protein degradation; proteasomal Pup-dependent pathway. With respect to regulation, the formation of the proteasomal ATPase ARC-20S proteasome complex, likely via the docking of the C-termini of ARC into the intersubunit pockets in the alpha-rings, may trigger opening of the gate for substrate entry. Interconversion between the open-gate and close-gate conformations leads to a dynamic regulation of the 20S proteasome proteolysis activity. Component of the proteasome core, a large protease complex with broad specificity involved in protein degradation. The R.erythropolis proteasomes are able to cleave oligopeptides after Tyr, Phe and Leu, very poorly after Arg but not after Glu. Thus, displays chymotrypsin-like activity, low trypsin-like activity but no caspase-like activity. The protein is Proteasome subunit alpha 2 of Rhodococcus erythropolis (Arthrobacter picolinophilus).